Here is a 729-residue protein sequence, read N- to C-terminus: Fatty acid oxidation complex subunit alpha (729 aa).

An enoyl-CoA hydratase/isomerase region spans residues 1 to 189 (MLYKGDTLYL…KIGLVDGVVA (189 aa)). Asp-296 serves as a coordination point for substrate. The tract at residues 311–729 (ETPKHAAVLG…ARPVGALKTA (419 aa)) is 3-hydroxyacyl-CoA dehydrogenase. Residues Met-324, Asp-343, 400-402 (VVE), Lys-407, and Ser-429 contribute to the NAD(+) site. The active-site For 3-hydroxyacyl-CoA dehydrogenase activity is His-450. Asn-453 is an NAD(+) binding site. Substrate is bound by residues Asn-500 and Tyr-660.

In the N-terminal section; belongs to the enoyl-CoA hydratase/isomerase family. This sequence in the C-terminal section; belongs to the 3-hydroxyacyl-CoA dehydrogenase family. In terms of assembly, heterotetramer of two alpha chains (FadB) and two beta chains (FadA).

It carries out the reaction a (3S)-3-hydroxyacyl-CoA + NAD(+) = a 3-oxoacyl-CoA + NADH + H(+). The enzyme catalyses a (3S)-3-hydroxyacyl-CoA = a (2E)-enoyl-CoA + H2O. It catalyses the reaction a 4-saturated-(3S)-3-hydroxyacyl-CoA = a (3E)-enoyl-CoA + H2O. The catalysed reaction is (3S)-3-hydroxybutanoyl-CoA = (3R)-3-hydroxybutanoyl-CoA. It carries out the reaction a (3Z)-enoyl-CoA = a 4-saturated (2E)-enoyl-CoA. The enzyme catalyses a (3E)-enoyl-CoA = a 4-saturated (2E)-enoyl-CoA. It functions in the pathway lipid metabolism; fatty acid beta-oxidation. Its function is as follows. Involved in the aerobic and anaerobic degradation of long-chain fatty acids via beta-oxidation cycle. Catalyzes the formation of 3-oxoacyl-CoA from enoyl-CoA via L-3-hydroxyacyl-CoA. It can also use D-3-hydroxyacyl-CoA and cis-3-enoyl-CoA as substrate. The polypeptide is Fatty acid oxidation complex subunit alpha (Klebsiella pneumoniae subsp. pneumoniae (strain ATCC 700721 / MGH 78578)).